The following is a 779-amino-acid chain: Kazrin (779 aa).

A coiled-coil region spans residues 79-261; it reads AQVLLREEVV…LATLTKDVPK (183 aa). Residues 295-366 are disordered; the sequence is QQTLYHSHPP…PGPVQKSLHN (72 aa). 3 positions are modified to phosphoserine: Ser-356, Ser-371, and Ser-391. The segment at 403-429 is disordered; it reads KSLDPGLFDDSDSQCSPTRHSLSLSEG. Residues 415-426 show a composition bias toward polar residues; it reads SQCSPTRHSLSL. SAM domains follow at residues 450–515, 528–592, and 616–683; these read WKAG…YRDA, DHHW…LYQV, and WTNQ…STIF. The disordered stretch occupies residues 685–779; sequence PSNSTGIRES…GYGSLEVTNV (95 aa). Residues 736–746 are compositionally biased toward basic and acidic residues; the sequence is SSKEPDFHDDY.

Belongs to the kazrin family. Expressed in skin interfollicular epidermis and hair follicles. Expressed in tongue epithelium basal suprabasal layers.

Its subcellular location is the cell junction. It is found in the nucleus. It localises to the cytoplasm. The protein resides in the cytoskeleton. Its function is as follows. Component of the cornified envelope of keratinocytes. May be involved in the interplay between adherens junctions and desmosomes. The function in the nucleus is not known. The polypeptide is Kazrin (Kazn) (Mus musculus (Mouse)).